Reading from the N-terminus, the 343-residue chain is Glyceraldehyde-3-phosphate dehydrogenase 1 (343 aa).

NAD(+) is bound by residues 13-14 (RI), Asp35, Arg79, and Ser121. Residues 154–156 (SCT), Thr185, 214–215 (TG), and Arg237 each bind D-glyceraldehyde 3-phosphate. Cys155 acts as the Nucleophile in catalysis. Asn319 contributes to the NAD(+) binding site.

Belongs to the glyceraldehyde-3-phosphate dehydrogenase family. Homotetramer.

The protein localises to the cytoplasm. It catalyses the reaction D-glyceraldehyde 3-phosphate + phosphate + NAD(+) = (2R)-3-phospho-glyceroyl phosphate + NADH + H(+). Its pathway is carbohydrate degradation; glycolysis; pyruvate from D-glyceraldehyde 3-phosphate: step 1/5. Its function is as follows. Catalyzes the oxidative phosphorylation of glyceraldehyde 3-phosphate (G3P) to 1,3-bisphosphoglycerate (BPG) using the cofactor NAD. The first reaction step involves the formation of a hemiacetal intermediate between G3P and a cysteine residue, and this hemiacetal intermediate is then oxidized to a thioester, with concomitant reduction of NAD to NADH. The reduced NADH is then exchanged with the second NAD, and the thioester is attacked by a nucleophilic inorganic phosphate to produce BPG. The polypeptide is Glyceraldehyde-3-phosphate dehydrogenase 1 (gap1) (Nostoc sp. (strain PCC 7120 / SAG 25.82 / UTEX 2576)).